A 1650-amino-acid polypeptide reads, in one-letter code: Phosphatidylinositol 3,4,5-trisphosphate-dependent Rac exchanger 1 protein (1650 aa).

Positions Met1–Gly19 are enriched in gly residues. The tract at residues Met1–Ala33 is disordered. One can recognise a DH domain in the interval Leu44 to Thr235. The PH domain occupies Glu266 to Glu387. The residue at position 314 (Ser314) is a Phosphoserine. 2 DEP domains span residues Met416–Tyr491 and Ser518–Ala592. The PDZ domain occupies Arg620–Ala698. Residues Ala793–Ala813 form a disordered region. Positions Pro800–Pro810 are enriched in acidic residues. Ser991 is modified (phosphoserine). 2 disordered regions span residues Ser1022–Ser1047 and Pro1099–Arg1129. The segment covering Gln1030–Ser1047 has biased composition (polar residues). Residues Pro1109–Ser1122 show a composition bias toward low complexity. Phosphoserine occurs at positions 1186 and 1191.

In terms of assembly, interacts preferentially with RAC2. Interacts with RAC1. Interacts with AUTS2.

The protein resides in the cytoplasm. The protein localises to the cytosol. It localises to the cell membrane. In terms of biological role, functions as a RAC guanine nucleotide exchange factor (GEF), which activates the Rac proteins by exchanging bound GDP for free GTP. Its activity is synergistically activated by phosphatidylinositol 3,4,5-trisphosphate and the beta gamma subunits of heterotrimeric G protein. May function downstream of heterotrimeric G proteins in neutrophils. The sequence is that of Phosphatidylinositol 3,4,5-trisphosphate-dependent Rac exchanger 1 protein (Prex1) from Mus musculus (Mouse).